A 506-amino-acid polypeptide reads, in one-letter code: Cysteine--tRNA ligase (506 aa).

A Zn(2+)-binding site is contributed by cysteine 34. Positions 36 to 46 (PTVYDFAHIGN) match the 'HIGH' region motif. Residues cysteine 230, histidine 269, and glutamate 273 each coordinate Zn(2+). The 'KMSKS' region signature appears at 302–306 (KMSKS). Lysine 305 lines the ATP pocket.

It belongs to the class-I aminoacyl-tRNA synthetase family. In terms of assembly, monomer. Requires Zn(2+) as cofactor.

Its subcellular location is the cytoplasm. The enzyme catalyses tRNA(Cys) + L-cysteine + ATP = L-cysteinyl-tRNA(Cys) + AMP + diphosphate. The sequence is that of Cysteine--tRNA ligase from Brucella suis (strain ATCC 23445 / NCTC 10510).